Consider the following 104-residue polypeptide: MAAIQGIEGVISQLQATAVGARGQETQSQPTMSFAGQLHAALDRISDRQTEARVQAEKFTLGEPGIALNDVMADMQKASVSMQMGIQVRNKLVAAYQEVMSMQV.

This sequence belongs to the FliE family.

Its subcellular location is the bacterial flagellum basal body. The chain is Flagellar hook-basal body complex protein FliE from Salmonella arizonae (strain ATCC BAA-731 / CDC346-86 / RSK2980).